The primary structure comprises 370 residues: DNA replication and repair protein RecF (370 aa).

30–37 (GENAQGKT) contributes to the ATP binding site.

This sequence belongs to the RecF family.

Its subcellular location is the cytoplasm. The RecF protein is involved in DNA metabolism; it is required for DNA replication and normal SOS inducibility. RecF binds preferentially to single-stranded, linear DNA. It also seems to bind ATP. The protein is DNA replication and repair protein RecF of Bacillus pumilus (strain SAFR-032).